The following is a 76-amino-acid chain: Conotoxin Vc6.9 (76 aa).

A signal peptide spans 1–19 (MEKLTILLLVAAVLMSTQA). A propeptide spanning residues 20-41 (LMQEQRQKAKINLFSKRKPSAE) is cleaved from the precursor. Cystine bridges form between cysteine 49-cysteine 63, cysteine 56-cysteine 67, and cysteine 62-cysteine 72.

Belongs to the conotoxin O2 superfamily. In terms of tissue distribution, expressed by the venom duct.

The protein localises to the secreted. In terms of biological role, inhibits voltage-gated ion channels. This chain is Conotoxin Vc6.9, found in Conus victoriae (Queen Victoria cone).